We begin with the raw amino-acid sequence, 319 residues long: Annexin A4 (319 aa).

A2 bears the N-acetylalanine mark. A Phosphothreonine; by PKC modification is found at T7. S12 carries the phosphoserine modification. Annexin repeat units follow at residues 14 to 85 (FNAA…GMMT), 86 to 157 (PTVL…SLSA), 169 to 241 (ALVR…AIVK), and 245 to 316 (NKSA…ILCG). N6-acetyllysine is present on residues K213, K293, and K300.

The protein belongs to the annexin family. As to quaternary structure, monomer.

It localises to the zymogen granule membrane. In terms of biological role, calcium/phospholipid-binding protein which promotes membrane fusion and is involved in exocytosis. In Sus scrofa (Pig), this protein is Annexin A4 (ANXA4).